Here is a 455-residue protein sequence, read N- to C-terminus: Bleomycin hydrolase (455 aa).

Residues C73, H372, and N396 contribute to the active site.

The protein belongs to the peptidase C1 family. Homooctamer.

The protein resides in the cytoplasm. It carries out the reaction Inactivates bleomycin B2 (a cytotoxic glycometallopeptide) by hydrolysis of a carboxyamide bond of beta-aminoalanine, but also shows general aminopeptidase activity. The specificity varies somewhat with source, but amino acid arylamides of Met, Leu and Ala are preferred.. Its function is as follows. The normal physiological role of BLM hydrolase is unknown, but it catalyzes the inactivation of the antitumor drug BLM (a glycopeptide) by hydrolyzing the carboxamide bond of its B-aminoalaninamide moiety thus protecting normal and malignant cells from BLM toxicity. The sequence is that of Bleomycin hydrolase (BLMH) from Gallus gallus (Chicken).